Reading from the N-terminus, the 910-residue chain is Protein translocase subunit SecA (910 aa).

ATP contacts are provided by residues Q87, 105-109 (GEGKT), and D508. The span at 558–568 (RHESRRIDNQL) shows a compositional bias: basic and acidic residues. 2 disordered regions span residues 558-580 (RHES…DPGS) and 873-910 (AAQQ…GQLS). Residues C894, C896, C905, and H906 each contribute to the Zn(2+) site. The segment covering 900–910 (KKYKHCHGQLS) has biased composition (basic residues).

Belongs to the SecA family. In terms of assembly, monomer and homodimer. Part of the essential Sec protein translocation apparatus which comprises SecA, SecYEG and auxiliary proteins SecDF-YajC and YidC. Zn(2+) serves as cofactor.

The protein resides in the cell inner membrane. It localises to the cytoplasm. It carries out the reaction ATP + H2O + cellular proteinSide 1 = ADP + phosphate + cellular proteinSide 2.. In terms of biological role, part of the Sec protein translocase complex. Interacts with the SecYEG preprotein conducting channel. Has a central role in coupling the hydrolysis of ATP to the transfer of proteins into and across the cell membrane, serving both as a receptor for the preprotein-SecB complex and as an ATP-driven molecular motor driving the stepwise translocation of polypeptide chains across the membrane. The sequence is that of Protein translocase subunit SecA from Stenotrophomonas maltophilia (strain R551-3).